Consider the following 152-residue polypeptide: Xanthine-guanine phosphoribosyltransferase (152 aa).

Residues 37–38 (RG) and 88–96 (DDLVDTGNT) each bind 5-phospho-alpha-D-ribose 1-diphosphate. Asp89 serves as a coordination point for Mg(2+). Positions 92 and 135 each coordinate guanine. 2 residues coordinate xanthine: Asp92 and Ile135. GMP-binding positions include 92-96 (DTGNT) and 134-135 (WI).

It belongs to the purine/pyrimidine phosphoribosyltransferase family. XGPT subfamily. Homotetramer. Mg(2+) is required as a cofactor.

The protein localises to the cell inner membrane. It catalyses the reaction GMP + diphosphate = guanine + 5-phospho-alpha-D-ribose 1-diphosphate. The enzyme catalyses XMP + diphosphate = xanthine + 5-phospho-alpha-D-ribose 1-diphosphate. The catalysed reaction is IMP + diphosphate = hypoxanthine + 5-phospho-alpha-D-ribose 1-diphosphate. It participates in purine metabolism; GMP biosynthesis via salvage pathway; GMP from guanine: step 1/1. The protein operates within purine metabolism; XMP biosynthesis via salvage pathway; XMP from xanthine: step 1/1. Functionally, purine salvage pathway enzyme that catalyzes the transfer of the ribosyl-5-phosphate group from 5-phospho-alpha-D-ribose 1-diphosphate (PRPP) to the N9 position of the 6-oxopurines guanine and xanthine to form the corresponding ribonucleotides GMP (guanosine 5'-monophosphate) and XMP (xanthosine 5'-monophosphate), with the release of PPi. To a lesser extent, also acts on hypoxanthine. The sequence is that of Xanthine-guanine phosphoribosyltransferase from Mannheimia succiniciproducens (strain KCTC 0769BP / MBEL55E).